A 143-amino-acid chain; its full sequence is Large ribosomal subunit protein uL11 (143 aa).

It belongs to the universal ribosomal protein uL11 family. In terms of assembly, part of the ribosomal stalk of the 50S ribosomal subunit. Interacts with L10 and the large rRNA to form the base of the stalk. L10 forms an elongated spine to which L12 dimers bind in a sequential fashion forming a multimeric L10(L12)X complex. In terms of processing, one or more lysine residues are methylated.

In terms of biological role, forms part of the ribosomal stalk which helps the ribosome interact with GTP-bound translation factors. This Thiobacillus denitrificans (strain ATCC 25259 / T1) protein is Large ribosomal subunit protein uL11.